A 208-amino-acid chain; its full sequence is Protein-L-isoaspartate O-methyltransferase (208 aa).

The active site involves Ser59.

This sequence belongs to the methyltransferase superfamily. L-isoaspartyl/D-aspartyl protein methyltransferase family.

It localises to the cytoplasm. It carries out the reaction [protein]-L-isoaspartate + S-adenosyl-L-methionine = [protein]-L-isoaspartate alpha-methyl ester + S-adenosyl-L-homocysteine. Functionally, catalyzes the methyl esterification of L-isoaspartyl residues in peptides and proteins that result from spontaneous decomposition of normal L-aspartyl and L-asparaginyl residues. It plays a role in the repair and/or degradation of damaged proteins. This Salmonella paratyphi A (strain ATCC 9150 / SARB42) protein is Protein-L-isoaspartate O-methyltransferase.